Consider the following 176-residue polypeptide: ATP synthase subunit delta (176 aa).

Belongs to the ATPase delta chain family. As to quaternary structure, F-type ATPases have 2 components, F(1) - the catalytic core - and F(0) - the membrane proton channel. F(1) has five subunits: alpha(3), beta(3), gamma(1), delta(1), epsilon(1). F(0) has three main subunits: a(1), b(2) and c(10-14). The alpha and beta chains form an alternating ring which encloses part of the gamma chain. F(1) is attached to F(0) by a central stalk formed by the gamma and epsilon chains, while a peripheral stalk is formed by the delta and b chains.

The protein localises to the cell membrane. Functionally, f(1)F(0) ATP synthase produces ATP from ADP in the presence of a proton or sodium gradient. F-type ATPases consist of two structural domains, F(1) containing the extramembraneous catalytic core and F(0) containing the membrane proton channel, linked together by a central stalk and a peripheral stalk. During catalysis, ATP synthesis in the catalytic domain of F(1) is coupled via a rotary mechanism of the central stalk subunits to proton translocation. In terms of biological role, this protein is part of the stalk that links CF(0) to CF(1). It either transmits conformational changes from CF(0) to CF(1) or is implicated in proton conduction. The polypeptide is ATP synthase subunit delta (Wigglesworthia glossinidia brevipalpis).